Consider the following 614-residue polypeptide: Translation initiation factor IF-2 (614 aa).

The tr-type G domain occupies 115–283 (ARAPIVTIMG…ILLIAELNNY (169 aa)). Positions 124–131 (GHVDHGKT) are G1. 124–131 (GHVDHGKT) is a GTP binding site. The tract at residues 149–153 (GITQH) is G2. Positions 170–173 (DTPG) are G3. GTP is bound by residues 170–174 (DTPGH) and 224–227 (NKMD). The segment at 224–227 (NKMD) is G4. The segment at 260–262 (SAL) is G5.

Belongs to the TRAFAC class translation factor GTPase superfamily. Classic translation factor GTPase family. IF-2 subfamily.

It is found in the cytoplasm. Its function is as follows. One of the essential components for the initiation of protein synthesis. Protects formylmethionyl-tRNA from spontaneous hydrolysis and promotes its binding to the 30S ribosomal subunits. Also involved in the hydrolysis of GTP during the formation of the 70S ribosomal complex. This chain is Translation initiation factor IF-2, found in Ureaplasma parvum serovar 3 (strain ATCC 27815 / 27 / NCTC 11736).